We begin with the raw amino-acid sequence, 337 residues long: GTPase Obg (337 aa).

The Obg domain maps to 4–162 (SNFIDYVKVC…AWVILELKVL (159 aa)). An OBG-type G domain is found at 163–329 (ADVGLVGFPN…LKDLLWTTMN (167 aa)). Residues 169–176 (GFPNAGKS), 194–198 (FTTLA), 216–219 (DIPG), 283–286 (SKSD), and 310–312 (SSY) each bind GTP. Mg(2+) is bound by residues serine 176 and threonine 196.

It belongs to the TRAFAC class OBG-HflX-like GTPase superfamily. OBG GTPase family. As to quaternary structure, monomer. The cofactor is Mg(2+).

It localises to the cytoplasm. An essential GTPase which binds GTP, GDP and possibly (p)ppGpp with moderate affinity, with high nucleotide exchange rates and a fairly low GTP hydrolysis rate. Plays a role in control of the cell cycle, stress response, ribosome biogenesis and in those bacteria that undergo differentiation, in morphogenesis control. This chain is GTPase Obg, found in Cytophaga hutchinsonii (strain ATCC 33406 / DSM 1761 / CIP 103989 / NBRC 15051 / NCIMB 9469 / D465).